A 176-amino-acid chain; its full sequence is Endoribonuclease YbeY (176 aa).

Residues histidine 138, histidine 142, and histidine 148 each contribute to the Zn(2+) site.

The protein belongs to the endoribonuclease YbeY family. The cofactor is Zn(2+).

It is found in the cytoplasm. Its function is as follows. Single strand-specific metallo-endoribonuclease involved in late-stage 70S ribosome quality control and in maturation of the 3' terminus of the 16S rRNA. The protein is Endoribonuclease YbeY of Trichormus variabilis (strain ATCC 29413 / PCC 7937) (Anabaena variabilis).